The primary structure comprises 149 residues: Deoxyuridine 5'-triphosphate nucleotidohydrolase (149 aa).

Residues Arg-68–Gly-70, Asn-81, Leu-85–Asp-87, and Met-95 each bind substrate.

The protein belongs to the dUTPase family. Requires Mg(2+) as cofactor.

The catalysed reaction is dUTP + H2O = dUMP + diphosphate + H(+). Its pathway is pyrimidine metabolism; dUMP biosynthesis; dUMP from dCTP (dUTP route): step 2/2. This enzyme is involved in nucleotide metabolism: it produces dUMP, the immediate precursor of thymidine nucleotides and it decreases the intracellular concentration of dUTP so that uracil cannot be incorporated into DNA. The sequence is that of Deoxyuridine 5'-triphosphate nucleotidohydrolase from Bordetella bronchiseptica (strain ATCC BAA-588 / NCTC 13252 / RB50) (Alcaligenes bronchisepticus).